The sequence spans 281 residues: Secretory carrier-associated membrane protein 5 (281 aa).

The segment at 1-49 (MHHDPNPFDEGADDNPFSNGGGGGARRGGGGGGGGGGGGGKSQFSFGFG) is disordered. Residues 1–139 (MHHDPNPFDE…AQKLQYLAFA (139 aa)) are Cytoplasmic-facing. Gly residues predominate over residues 19–49 (NGGGGGARRGGGGGGGGGGGGGKSQFSFGFG). Positions 76–102 (KELLQWEADLKRREADIRRREEALKSA) form a coiled coil. A run of 4 helical transmembrane segments spans residues 140 to 160 (SWLG…VCWI), 167 to 187 (LFFL…LMWY), 202 to 222 (FGWF…AAIA), and 250 to 270 (IFYF…IWVL). Residues 271 to 281 (QKVYMYFRGHK) lie on the Cytoplasmic side of the membrane.

The protein belongs to the SCAMP family.

It is found in the cell membrane. It localises to the cytoplasmic vesicle. The protein resides in the secretory vesicle membrane. In terms of biological role, probably involved in membrane trafficking. This chain is Secretory carrier-associated membrane protein 5 (SCAMP5), found in Oryza sativa subsp. japonica (Rice).